Consider the following 1188-residue polypeptide: MAGHDVQYGKHRTRRSFSRIKEVLDLPNLIEIQTDSFQDFLDSGLKEVFEDVLPISNFTDTMELEFVGYEFKEPKYTLEEARIHDASYSAPIFVTFRLINKETGEIKTQEVFFGDFPIMTEMGTFIINGGERIIVSQLVRSPGVYFNDKVDKNGKVGYGSTVIPNRGAWLELETDSKDIAYTRIDRTRKIPFTTLVRALGFSGDDEIIDIFGDSELVRNTIEKDIHKNQSDSRTDEALKEIYERLRPGEPKTADSSRSLLTARFFDARRYDLAAVGRYKINKKLNIKTRLLNQIIAENLIDSETGEILVEAGTEMTRSVIESIEEQLDGDLNKFVYTPNDYAVVTEPVILQKFKVVSPVDPDRVVTIVGNANPDDKVRALTPADILAEMSYFLNLAEGLGKVDDIDHLGNRRIRAVGELLANQFRIGLARMERNVRERMSVQDNDVLTPQQIINIRPVTAAVKEFFGSSQLSQFMDQHNPLSELSHKRRLSALGPGGLTRDRAGYEVRDVHYTHYGRMCPIETPEGPNIGLINNLSSFGHLNKYGFIQTPYRKVDRVIGRVTNEIVWLTADEEDEFTVAQANSKLNPDGTFAEEIVMGRHQGNNQEFPASQVDFVDVSPKQVVAVATACIPFLENDDSNRALMGANMQRQAVPLIDPKAPYVGTGMEYQAAHDSGAAVIAQHNGKVVFSDAERVEVRREDGSLDVYHITKFRRSNSGTAYNQRTLVKIGDIVEKGDFIADGPSMEKGEMALGQNPIVAYMTWEGYNFEDAVIMSERLVKEDVYTSVHLEEFESETRDTKLGPEEITREVPNVGEEALKDLDEMGIIRIGAEVKEGDILVGKVTPKGEKDLSAEERLLHAIFGDKSREVRDTSLRVPHGGDGIVRDVKIFTRANGDELQSGVNMLVRVYIAQKRKIKVGDKMAGRHGNKGVVSRIVPVEDMPYLPDGTPVDIMLNPLGVPSRMNIGQVMELHLGMAARNLGIHIATPVFDGATSEDLWETVREAGMDSDAKTVLYDGRTGEPFDNRVSVGVMYMIKLHHMVDDKLHARSVGPYSLVTQQPLGGKAQFGGQRFGEMEVWALEAYGASNVLQEILTYKSDDVNGRLKAYEAITKGKPIPKPGVPESFRVLVKELQSLGLDMRVLDEDDNEVELRDLDEGEDDDVMHVDDLEKAREKQAQETQDIAESTEDN.

The protein belongs to the RNA polymerase beta chain family. As to quaternary structure, the RNAP catalytic core consists of 2 alpha, 1 beta, 1 beta' and 1 omega subunit. When a sigma factor is associated with the core the holoenzyme is formed, which can initiate transcription.

The enzyme catalyses RNA(n) + a ribonucleoside 5'-triphosphate = RNA(n+1) + diphosphate. Functionally, DNA-dependent RNA polymerase catalyzes the transcription of DNA into RNA using the four ribonucleoside triphosphates as substrates. This Streptococcus equi subsp. equi (strain 4047) protein is DNA-directed RNA polymerase subunit beta.